The primary structure comprises 415 residues: tRNA(Ile2) 2-agmatinylcytidine synthetase TiaS (415 aa).

The protein belongs to the TiaS family.

It localises to the cytoplasm. The enzyme catalyses cytidine(34) in tRNA(Ile2) + agmatine + ATP + H2O = 2-agmatinylcytidine(34) in tRNA(Ile2) + AMP + 2 phosphate + 2 H(+). Functionally, ATP-dependent agmatine transferase that catalyzes the formation of 2-agmatinylcytidine (agm2C) at the wobble position (C34) of tRNA(Ile2), converting the codon specificity from AUG to AUA. The sequence is that of tRNA(Ile2) 2-agmatinylcytidine synthetase TiaS from Pyrobaculum neutrophilum (strain DSM 2338 / JCM 9278 / NBRC 100436 / V24Sta) (Thermoproteus neutrophilus).